We begin with the raw amino-acid sequence, 22 residues long: Cysteine protease inhibitor 4 (22 aa).

It belongs to the protease inhibitor I3 (leguminous Kunitz-type inhibitor) family. As to expression, tubers.

Its subcellular location is the vacuole. Its function is as follows. Inhibitor of papain (cysteine protease). Does not inhibit trypsin, chymotrypsin nor elastase (serine proteases). May protect the plant by inhibiting proteases of invading organisms. The polypeptide is Cysteine protease inhibitor 4 (Solanum tuberosum (Potato)).